Reading from the N-terminus, the 674-residue chain is tRNA 5-methylaminomethyl-2-thiouridine biosynthesis bifunctional protein MnmC (674 aa).

The tRNA (mnm(5)s(2)U34)-methyltransferase stretch occupies residues 1 to 246; the sequence is MFIMSSISHA…KREMIAGSLS (246 aa). Residues 272 to 674 form an FAD-dependent cmnm(5)s(2)U34 oxidoreductase region; it reads IGGGIASATL…RKGKALTQKV (403 aa).

It in the N-terminal section; belongs to the methyltransferase superfamily. tRNA (mnm(5)s(2)U34)-methyltransferase family. The protein in the C-terminal section; belongs to the DAO family. Requires FAD as cofactor.

It is found in the cytoplasm. The catalysed reaction is 5-aminomethyl-2-thiouridine(34) in tRNA + S-adenosyl-L-methionine = 5-methylaminomethyl-2-thiouridine(34) in tRNA + S-adenosyl-L-homocysteine + H(+). Functionally, catalyzes the last two steps in the biosynthesis of 5-methylaminomethyl-2-thiouridine (mnm(5)s(2)U) at the wobble position (U34) in tRNA. Catalyzes the FAD-dependent demodification of cmnm(5)s(2)U34 to nm(5)s(2)U34, followed by the transfer of a methyl group from S-adenosyl-L-methionine to nm(5)s(2)U34, to form mnm(5)s(2)U34. The polypeptide is tRNA 5-methylaminomethyl-2-thiouridine biosynthesis bifunctional protein MnmC (Vibrio cholerae serotype O1 (strain ATCC 39315 / El Tor Inaba N16961)).